The following is an 898-amino-acid chain: Metalloprotease StcE (898 aa).

Positions 1–35 (MNTKMNERWRTPMKLKYLSCTILAPLAIGVFSATA) are cleaved as a signal peptide. Residues 296-551 (ELLLHTIDIG…QRFFENKAVF (256 aa)) enclose the Peptidase M66 domain. His446 contributes to the Zn(2+) binding site. The active site involves Glu447. Zn(2+) is bound by residues His450 and His456.

Requires Zn(2+) as cofactor.

The protein resides in the secreted. With respect to regulation, inhibited by divalent cation chelators such as BPS and EDTA. Virulence factor that contributes to intimate adherence of enterohemorrhagic E.coli (EHEC) O157:H7 to host cells. Is able to cleave the secreted human mucin 7 (MUC7) and the glycoprotein 340 (DMBT1/GP340). Also cleaves human C1 inhibitor (SERPING1), a regulator of multiple inflammatory pathways, and binds and localizes it to bacterial and host cell surfaces, protecting them from complement-mediated lysis. Therefore, the current model proposes two roles for StcE during infection: it acts first as a mucinase, allowing passage of EHEC through the oral cavity by cleaving the salivary glycoproteins that are responsible for bacterial aggregation. Similarly, in the colon, StcE cleaves the glycoproteins that protect the intestinal epithelial surface, allowing EHEC to come into close contact with host cell membranes. Secondly, it acts as an anti-inflammatory agent by localizing SERPING1 to cell membranes. The sequence is that of Metalloprotease StcE (stcE) from Escherichia coli O157:H7.